The chain runs to 314 residues: Ribosomal RNA small subunit methyltransferase H (314 aa).

S-adenosyl-L-methionine-binding positions include 36–38 (GGH), D56, F81, D103, and Q110.

The protein belongs to the methyltransferase superfamily. RsmH family.

The protein resides in the cytoplasm. It carries out the reaction cytidine(1402) in 16S rRNA + S-adenosyl-L-methionine = N(4)-methylcytidine(1402) in 16S rRNA + S-adenosyl-L-homocysteine + H(+). Specifically methylates the N4 position of cytidine in position 1402 (C1402) of 16S rRNA. This chain is Ribosomal RNA small subunit methyltransferase H, found in Shewanella sediminis (strain HAW-EB3).